A 361-amino-acid chain; its full sequence is Homeobox protein knotted-1-like 6 (361 aa).

Positions 11–48 (VGASGVHGGHQHQHHHHPWGSSLSAIVAPPPPPQLQQQ) are disordered. The segment covering 19 to 28 (GHQHQHHHHP) has biased composition (basic residues). The 21-residue stretch at 242–262 (ELKHHLLKKYSGYLSSLKQEL) folds into the ELK domain. Residues 263 to 326 (SKKKKKGKLP…NQRKRHWKPS (64 aa)) constitute a DNA-binding region (homeobox; TALE-type).

Belongs to the TALE/KNOX homeobox family. As to quaternary structure, interacts with FTIP7. Expressed predominantly in shoot apices. Also found to a lesser extent in glumes.

Its subcellular location is the nucleus. The protein resides in the cytoplasm. Functionally, transcription factor that regulates genes involved in development. May be involved in shoot formation during embryogenesis. Overexpression in transgenic plants causes altered leaf morphology. Regulates anther dehiscence via direct repression of the auxin biosynthetic gene YUCCA4. Binds to the DNA sequence 5'-TGAC-3' in the promoter of the YUCCA4 gene and represses its activity during anther development. Reduction of auxin levels at late stage of anther development, after meiosis of microspore mother cells, is necessary for normal anther dehiscence and seed setting. The chain is Homeobox protein knotted-1-like 6 (OSH1) from Oryza sativa subsp. japonica (Rice).